The following is a 284-amino-acid chain: 2-dehydro-3-deoxyphosphooctonate aldolase (284 aa).

This sequence belongs to the KdsA family.

The protein resides in the cytoplasm. The catalysed reaction is D-arabinose 5-phosphate + phosphoenolpyruvate + H2O = 3-deoxy-alpha-D-manno-2-octulosonate-8-phosphate + phosphate. It participates in carbohydrate biosynthesis; 3-deoxy-D-manno-octulosonate biosynthesis; 3-deoxy-D-manno-octulosonate from D-ribulose 5-phosphate: step 2/3. The protein operates within bacterial outer membrane biogenesis; lipopolysaccharide biosynthesis. This is 2-dehydro-3-deoxyphosphooctonate aldolase from Haemophilus influenzae (strain PittEE).